The primary structure comprises 261 residues: Zinc finger protein 664 (261 aa).

9 consecutive C2H2-type zinc fingers follow at residues 3–25 (YKCP…QKIH), 31–53 (HKCD…WRDH), 59–81 (YKCD…KKIH), 87–109 (YKCY…MRVH), 115–137 (YVCS…QRVH), 143–165 (FKCE…QRVH), 171–193 (YKCY…QRVH), 199–221 (YRCC…QRVH), and 227–249 (FKCD…QRVH). Lysine 257 is covalently cross-linked (Glycyl lysine isopeptide (Lys-Gly) (interchain with G-Cter in SUMO2)).

The protein belongs to the krueppel C2H2-type zinc-finger protein family.

The protein resides in the nucleus. Its function is as follows. May be involved in transcriptional regulation. The polypeptide is Zinc finger protein 664 (ZNF664) (Pongo abelii (Sumatran orangutan)).